The sequence spans 642 residues: Sodium- and chloride-dependent neutral and basic amino acid transporter B(0+) (642 aa).

Over 1-44 (MDKLKCPSFFKCREKEKVSASSENFHVGENDENQDRGNWSKKSD) the chain is Cytoplasmic. The next 3 helical transmembrane spans lie at 45–65 (YLLS…FPYL), 72–92 (GAFL…LFFL), and 110–130 (ILPL…FVTI). Residues 131–234 (YYNVIIAYSL…RSSGMNETGV (104 aa)) are Extracellular-facing. N-linked (GlcNAc...) asparagine glycans are attached at residues asparagine 155, asparagine 163, asparagine 174, asparagine 189, asparagine 197, asparagine 202, and asparagine 230. A run of 2 helical transmembrane segments spans residues 235-255 (IVWY…AALF) and 261-281 (SGKV…ILLV). Residue asparagine 302 is glycosylated (N-linked (GlcNAc...) asparagine). Helical transmembrane passes span 315-335 (AATQ…ALSS), 348-368 (IVVC…IFSI), 399-419 (LAQL…LLTL), 450-477 (ITLG…VHLI), 480-500 (FCAG…IIWI), 528-548 (CWFV…LVQF), and 563-583 (VALG…MAII). Topologically, residues 584–642 (KIIQAKGNIFQRLISCCRPASNWGPYLEQHRGERYKDMVDPKKEADHEIPTVSGSRKPE) are cytoplasmic. Basic and acidic residues predominate over residues 622-632 (VDPKKEADHEI). The segment at 622-642 (VDPKKEADHEIPTVSGSRKPE) is disordered.

This sequence belongs to the sodium:neurotransmitter symporter (SNF) (TC 2.A.22) family. SLC6A14 subfamily. In terms of tissue distribution, levels are highest in adult and fetal lung, in trachea and salivary gland. Lower levels detected in mammary gland, stomach and pituitary gland, and very low levels in colon, uterus, prostate and testis.

It localises to the membrane. Its subcellular location is the apical cell membrane. It catalyses the reaction glycine(out) + chloride(out) + 2 Na(+)(out) = glycine(in) + chloride(in) + 2 Na(+)(in). The catalysed reaction is L-leucine(out) + chloride(out) + 2 Na(+)(out) = L-leucine(in) + chloride(in) + 2 Na(+)(in). It carries out the reaction L-glutamine(out) + chloride(out) + 2 Na(+)(out) = L-glutamine(in) + chloride(in) + 2 Na(+)(in). The enzyme catalyses L-arginine(out) + chloride(out) + 2 Na(+)(out) = L-arginine(in) + chloride(in) + 2 Na(+)(in). It catalyses the reaction (R)-carnitine(out) + chloride(out) + 2 Na(+)(out) = (R)-carnitine(in) + chloride(in) + 2 Na(+)(in). The catalysed reaction is O-butanoyl-(R)-carnitine(out) + chloride(out) + 2 Na(+)(out) = O-butanoyl-(R)-carnitine(in) + chloride(in) + 2 Na(+)(in). It carries out the reaction O-propanoyl-(R)-carnitine(out) + chloride(out) + 2 Na(+)(out) = O-propanoyl-(R)-carnitine(in) + chloride(in) + 2 Na(+)(in). The enzyme catalyses L-isoleucine(out) + chloride(out) + 2 Na(+)(out) = L-isoleucine(in) + chloride(in) + 2 Na(+)(in). It catalyses the reaction L-methionine(out) + chloride(out) + 2 Na(+)(out) = L-methionine(in) + chloride(in) + 2 Na(+)(in). The catalysed reaction is L-valine(out) + chloride(out) + 2 Na(+)(out) = L-valine(in) + chloride(in) + 2 Na(+)(in). It carries out the reaction L-alanine(out) + chloride(out) + 2 Na(+)(out) = L-alanine(in) + chloride(in) + 2 Na(+)(in). The enzyme catalyses L-serine(out) + chloride(out) + 2 Na(+)(out) = L-serine(in) + chloride(in) + 2 Na(+)(in). It catalyses the reaction L-cysteine(out) + chloride(out) + 2 Na(+)(out) = L-cysteine(in) + chloride(in) + 2 Na(+)(in). The catalysed reaction is L-asparagine(out) + chloride(out) + 2 Na(+)(out) = L-asparagine(in) + chloride(in) + 2 Na(+)(in). It carries out the reaction L-threonine(out) + chloride(out) + 2 Na(+)(out) = L-threonine(in) + chloride(in) + 2 Na(+)(in). The enzyme catalyses L-phenylalanine(out) + chloride(out) + 2 Na(+)(out) = L-phenylalanine(in) + chloride(in) + 2 Na(+)(in). It catalyses the reaction L-tryptophan(out) + chloride(out) + 2 Na(+)(out) = L-tryptophan(in) + chloride(in) + 2 Na(+)(in). The catalysed reaction is L-tyrosine(out) + chloride(out) + 2 Na(+)(out) = L-tyrosine(in) + chloride(in) + 2 Na(+)(in). It carries out the reaction L-histidine(out) + chloride(out) + 2 Na(+)(out) = L-histidine(in) + chloride(in) + 2 Na(+)(in). The enzyme catalyses L-lysine(out) + chloride(out) + 2 Na(+)(out) = L-lysine(in) + chloride(in) + 2 Na(+)(in). It catalyses the reaction beta-alanine(out) + chloride(out) + 2 Na(+)(out) = beta-alanine(in) + chloride(in) + 2 Na(+)(in). Its function is as follows. Amino acid transporter that plays an important role in the absorption of amino acids in the intestinal tract. Mediates the uptake of a broad range of neutral and cationic amino acids (with the exception of proline) in a Na(+)/Cl(-)-dependent manner. Transports non-alpha-amino acids such as beta-alanine with low affinity, and has a higher affinity for dipolar and cationic amino acids such as leucine and lysine. Can also transport carnitine, butirylcarnitine and propionylcarnitine coupled to the transmembrane gradients of Na(+) and Cl(-). The chain is Sodium- and chloride-dependent neutral and basic amino acid transporter B(0+) from Homo sapiens (Human).